The primary structure comprises 319 residues: Probable arabinan endo-1,5-alpha-L-arabinosidase A (319 aa).

The signal sequence occupies residues Met-1 to Gly-19. The active-site Proton acceptor is Asp-34. Residue Asn-53 is glycosylated (N-linked (GlcNAc...) asparagine). Catalysis depends on Glu-198, which acts as the Proton donor.

It belongs to the glycosyl hydrolase 43 family.

Its subcellular location is the secreted. The enzyme catalyses Endohydrolysis of (1-&gt;5)-alpha-arabinofuranosidic linkages in (1-&gt;5)-arabinans.. Its pathway is glycan metabolism; L-arabinan degradation. Functionally, endo-1,5-alpha-L-arabinanase involved in degradation of pectin. Its preferred substrate is linear 1,5-alpha-L-arabinan. In Aspergillus flavus (strain ATCC 200026 / FGSC A1120 / IAM 13836 / NRRL 3357 / JCM 12722 / SRRC 167), this protein is Probable arabinan endo-1,5-alpha-L-arabinosidase A (abnA).